Here is a 293-residue protein sequence, read N- to C-terminus: Triacylglycerol lipase (293 aa).

The AB hydrolase-1 domain maps to 10 to 206 (PILLVHGLFG…YYSWSGIIKG (197 aa)). Leu17 is a binding site for substrate. Ser83 serves as the catalytic Nucleophile. Gln84 contributes to the substrate binding site. Asp217 provides a ligand contact to Ca(2+). Active-site charge relay system residues include Asp238 and His260. Ca(2+) is bound by residues Asp262, His266, and Arg269.

It belongs to the AB hydrolase superfamily. Pseudomonas lipase family. Ca(2+) serves as cofactor.

The protein localises to the secreted. It catalyses the reaction a triacylglycerol + H2O = a diacylglycerol + a fatty acid + H(+). Catalyzes the hydrolysis of triacylglycerols, with the highest activity with tributyrin (C4), lower activity with tricaprylin (C8), and much lower activity with triacetin (C2), trilaurin (C12) and triolein (C18). This chain is Triacylglycerol lipase (lips), found in Pseudomonas fragi.